Consider the following 145-residue polypeptide: MYPAHLLLLLAVCVSLLGASAIPPLPLNLAQFALVIKCADKGKRPRWHYMDYGCYCGPGGSGTPIDELDRCCKTHDECYAQAEKKGCYPKLTMYSYYCGGDGPYCNSKTECQRFVCDCDVRAADCFARYPYNNKNYNINTSKRCK.

A signal peptide spans 1-21 (MYPAHLLLLLAVCVSLLGASA). The propeptide occupies 22 to 27 (IPPLPL). 7 cysteine pairs are disulfide-bonded: C38–C98, C54–C144, C56–C72, C71–C125, C78–C118, C87–C111, and C105–C116. Y55, G57, and G59 together coordinate Ca(2+). The active site involves H75. A Ca(2+)-binding site is contributed by D76. Residue D119 is part of the active site.

Belongs to the phospholipase A2 family. Group I subfamily. D49 sub-subfamily. Ca(2+) serves as cofactor.

The protein resides in the secreted. The enzyme catalyses a 1,2-diacyl-sn-glycero-3-phosphocholine + H2O = a 1-acyl-sn-glycero-3-phosphocholine + a fatty acid + H(+). PLA2 catalyzes the calcium-dependent hydrolysis of the 2-acyl groups in 3-sn-phosphoglycerides. The chain is Basic phospholipase A2 PC14 from Laticauda laticaudata (Blue-ringed sea krait).